A 320-amino-acid chain; its full sequence is Apolipoprotein E (320 aa).

The first 18 residues, 1–18 (MKVLWAALLVAFLAGCQG), serve as a signal peptide directing secretion. A run of 8 repeats spans residues 82–103 (ALMD…EQLS), 104–125 (PVAE…ARLG), 126–147 (ADME…AMLG), 148–169 (QSTE…KRLL), 170–191 (RDVD…EGAE), 192–213 (RGVS…ARAA), 214–236 (TVGS…ERLR), and 237–258 (ARME…EQVE). Residues 82–258 (ALMDETMKEL…RLDEVKEQVE (177 aa)) are 8 X 22 AA approximate tandem repeats. Residue M145 is modified to Methionine sulfoxide. S149 is subject to Phosphoserine. The interval 160-170 (HLRKLRKRLLR) is LDL and other lipoprotein receptors binding. Residue 164–167 (LRKR) coordinates heparin. Residues 212 to 293 (AATVGSSLAG…SWFEPLVEDM (82 aa)) form a lipid-binding and lipoprotein association region. Heparin is bound at residue 232 to 239 (GERLRARM). The tract at residues 269 to 320 (QQMRLQAEAFQARLKSWFEPLVEDMQRQWAGLVEKVQAAVGASAAPVPSDNH) is homooligomerization. A specificity for association with VLDL region spans residues 281–293 (RLKSWFEPLVEDM).

This sequence belongs to the apolipoprotein A1/A4/E family. In terms of assembly, homotetramer. May interact with ABCA1; functionally associated with ABCA1 in the biogenesis of HDLs. May interact with APP/A4 amyloid-beta peptide; the interaction is extremely stable in vitro but its physiological significance is unclear. May interact with MAPT. May interact with MAP2. In the cerebrospinal fluid, interacts with secreted SORL1. Interacts with PMEL; this allows the loading of PMEL luminal fragment on ILVs to induce fibril nucleation. Post-translationally, APOE exists as multiple glycosylated and sialylated glycoforms within cells and in plasma. The extent of glycosylation and sialylation are tissue and context specific. Glycated in plasma VLDL. In terms of processing, phosphorylated by FAM20C in the extracellular medium.

It localises to the secreted. The protein localises to the extracellular space. It is found in the extracellular matrix. Its subcellular location is the extracellular vesicle. The protein resides in the endosome. It localises to the multivesicular body. In terms of biological role, APOE is an apolipoprotein, a protein associating with lipid particles, that mainly functions in lipoprotein-mediated lipid transport between organs via the plasma and interstitial fluids. APOE is a core component of plasma lipoproteins and is involved in their production, conversion and clearance. Apolipoproteins are amphipathic molecules that interact both with lipids of the lipoprotein particle core and the aqueous environment of the plasma. As such, APOE associates with chylomicrons, chylomicron remnants, very low density lipoproteins (VLDL) and intermediate density lipoproteins (IDL) but shows a preferential binding to high-density lipoproteins (HDL). It also binds a wide range of cellular receptors including the LDL receptor/LDLR, the LDL receptor-related proteins LRP1, LRP2 and LRP8 and the very low-density lipoprotein receptor/VLDLR that mediate the cellular uptake of the APOE-containing lipoprotein particles. Finally, APOE also has a heparin-binding activity and binds heparan-sulfate proteoglycans on the surface of cells, a property that supports the capture and the receptor-mediated uptake of APOE-containing lipoproteins by cells. A main function of APOE is to mediate lipoprotein clearance through the uptake of chylomicrons, VLDLs, and HDLs by hepatocytes. APOE is also involved in the biosynthesis by the liver of VLDLs as well as their uptake by peripheral tissues ensuring the delivery of triglycerides and energy storage in muscle, heart and adipose tissues. By participating in the lipoprotein-mediated distribution of lipids among tissues, APOE plays a critical role in plasma and tissues lipid homeostasis. APOE is also involved in two steps of reverse cholesterol transport, the HDLs-mediated transport of cholesterol from peripheral tissues to the liver, and thereby plays an important role in cholesterol homeostasis. First, it is functionally associated with ABCA1 in the biogenesis of HDLs in tissues. Second, it is enriched in circulating HDLs and mediates their uptake by hepatocytes. APOE also plays an important role in lipid transport in the central nervous system, regulating neuron survival and sprouting. The protein is Apolipoprotein E (APOE) of Plecturocebus moloch (Dusky titi monkey).